The chain runs to 513 residues: OTU domain-containing protein 5-A (513 aa).

Disordered stretches follow at residues 1-75 (MTIL…GGAG) and 99-136 (GPGH…DEYE). The OTU domain occupies 166–289 (FIIKQMKEDG…NIHYNSVVNP (124 aa)). The cys-loop stretch occupies residues 171 to 177 (MKEDGAC). D174 is an active-site residue. C177 serves as the catalytic Nucleophile. Positions 226–236 (KRKNNCHGNHI) are variable-loop. Residues 277–282 (YHRNIH) form a his-loop region. H282 is an active-site residue. The segment at 387 to 446 (LEEWSGRSPRQRSTAGSPEHPDLHAELCMKPPSPGAPLILGKPPSPCAPGPSNQMSTGAD) is disordered.

Belongs to the peptidase C85 family.

The catalysed reaction is Thiol-dependent hydrolysis of ester, thioester, amide, peptide and isopeptide bonds formed by the C-terminal Gly of ubiquitin (a 76-residue protein attached to proteins as an intracellular targeting signal).. Deubiquitinating enzyme that may function as negative regulator of the innate immune system. Has peptidase activity towards 'Lys-48'- and 'Lys-63'-linked polyubiquitin chains. Can also cleave 'Lys-11'-linked ubiquitin chains (in vitro). The sequence is that of OTU domain-containing protein 5-A (otud5-a) from Xenopus laevis (African clawed frog).